The chain runs to 80 residues: Acyl carrier protein (80 aa).

One can recognise a Carrier domain in the interval 4-79; the sequence is EEIKDKVFDI…QAIDYIVNAK (76 aa). Serine 39 carries the post-translational modification O-(pantetheine 4'-phosphoryl)serine.

It belongs to the acyl carrier protein (ACP) family. In terms of processing, 4'-phosphopantetheine is transferred from CoA to a specific serine of apo-ACP by AcpS. This modification is essential for activity because fatty acids are bound in thioester linkage to the sulfhydryl of the prosthetic group.

It localises to the cytoplasm. It functions in the pathway lipid metabolism; fatty acid biosynthesis. In terms of biological role, carrier of the growing fatty acid chain in fatty acid biosynthesis. The polypeptide is Acyl carrier protein (Prosthecochloris aestuarii (strain DSM 271 / SK 413)).